The primary structure comprises 399 residues: Ribonuclease D (399 aa).

Residues 31–197 (RVVTDNTALL…PLYHILEKEL (167 aa)) form the 3'-5' exonuclease domain. Residues 239–318 (NPLELSRLRV…SQARRISSND (80 aa)) enclose the HRDC domain.

The protein belongs to the RNase D family. The cofactor is a divalent metal cation.

It localises to the cytoplasm. The catalysed reaction is Exonucleolytic cleavage that removes extra residues from the 3'-terminus of tRNA to produce 5'-mononucleotides.. In terms of biological role, exonuclease involved in the 3' processing of various precursor tRNAs. Initiates hydrolysis at the 3'-terminus of an RNA molecule and releases 5'-mononucleotides. The sequence is that of Ribonuclease D from Haemophilus influenzae (strain ATCC 51907 / DSM 11121 / KW20 / Rd).